The chain runs to 130 residues: Small ribosomal subunit protein uS9 (130 aa).

The protein belongs to the universal ribosomal protein uS9 family.

This chain is Small ribosomal subunit protein uS9, found in Sodalis glossinidius (strain morsitans).